Consider the following 198-residue polypeptide: Recombination protein RecR (198 aa).

The C4-type zinc finger occupies 58 to 73 (CSICGNFTDSDPCAIC). Positions 81–175 (SIICVIEEPK…KVTRIAHGIP (95 aa)) constitute a Toprim domain.

It belongs to the RecR family.

Its function is as follows. May play a role in DNA repair. It seems to be involved in an RecBC-independent recombinational process of DNA repair. It may act with RecF and RecO. In Clostridium kluyveri (strain NBRC 12016), this protein is Recombination protein RecR.